The sequence spans 460 residues: Adenosylhomocysteinase (460 aa).

Residues T83, D158, and E184 each contribute to the substrate site. 185-187 lines the NAD(+) pocket; it reads TTT. 2 residues coordinate substrate: K214 and D218. Residues N219, 248–253, E271, 327–329, and N373 each bind NAD(+); these read GYGDVG and IGH.

This sequence belongs to the adenosylhomocysteinase family. NAD(+) serves as cofactor.

It is found in the cytoplasm. The catalysed reaction is S-adenosyl-L-homocysteine + H2O = L-homocysteine + adenosine. It participates in amino-acid biosynthesis; L-homocysteine biosynthesis; L-homocysteine from S-adenosyl-L-homocysteine: step 1/1. Its function is as follows. May play a key role in the regulation of the intracellular concentration of adenosylhomocysteine. The polypeptide is Adenosylhomocysteinase (Bdellovibrio bacteriovorus (strain ATCC 15356 / DSM 50701 / NCIMB 9529 / HD100)).